The sequence spans 196 residues: Adenylate kinase (196 aa).

G9 to T17 serves as a coordination point for ATP.

This sequence belongs to the archaeal adenylate kinase family.

The protein localises to the cytoplasm. The enzyme catalyses AMP + ATP = 2 ADP. The protein is Adenylate kinase (adkA) of Pyrococcus abyssi (strain GE5 / Orsay).